Here is a 294-residue protein sequence, read N- to C-terminus: uncharacterized protein (294 aa).

A disordered region spans residues 1 to 32; the sequence is MSHLKDPTTQYYTGEYPKQKQPTPGIQAKMTP. Position 39 is an N6-acetyllysine (Lys-39). Residue 53-77 coordinates NADP(+); that stretch reads LVTGGDSGIGRAAAIAYAREGADVA. Ser-186 is a substrate binding site. Tyr-199 acts as the Proton acceptor in catalysis.

It belongs to the short-chain dehydrogenases/reductases (SDR) family.

This is an uncharacterized protein from Escherichia coli (strain K12).